A 417-amino-acid polypeptide reads, in one-letter code: Serine hydroxymethyltransferase (417 aa).

Residues L121 and 125–127 each bind (6S)-5,6,7,8-tetrahydrofolate; that span reads GHL. K229 carries the post-translational modification N6-(pyridoxal phosphate)lysine. (6S)-5,6,7,8-tetrahydrofolate is bound at residue 355 to 357; the sequence is SPF.

It belongs to the SHMT family. Homodimer. Pyridoxal 5'-phosphate is required as a cofactor.

The protein localises to the cytoplasm. The catalysed reaction is (6R)-5,10-methylene-5,6,7,8-tetrahydrofolate + glycine + H2O = (6S)-5,6,7,8-tetrahydrofolate + L-serine. It participates in one-carbon metabolism; tetrahydrofolate interconversion. It functions in the pathway amino-acid biosynthesis; glycine biosynthesis; glycine from L-serine: step 1/1. Functionally, catalyzes the reversible interconversion of serine and glycine with tetrahydrofolate (THF) serving as the one-carbon carrier. This reaction serves as the major source of one-carbon groups required for the biosynthesis of purines, thymidylate, methionine, and other important biomolecules. Also exhibits THF-independent aldolase activity toward beta-hydroxyamino acids, producing glycine and aldehydes, via a retro-aldol mechanism. This chain is Serine hydroxymethyltransferase, found in Enterobacter sp. (strain 638).